A 222-amino-acid chain; its full sequence is Oligoribonuclease (222 aa).

The disordered stretch occupies residues 19-38; sequence PMASSSSTGKQEESVNGSLE. Residues 21–35 show a composition bias toward polar residues; that stretch reads ASSSSTGKQEESVNG. The region spanning 46 to 210 is the Exonuclease domain; sequence LVWIDLEMTG…DDIRESIKEL (165 aa). His167 is an active-site residue.

The protein belongs to the oligoribonuclease family.

Its function is as follows. 3'-to-5' exoribonuclease specific for small oligoribonucleotides. This Arabidopsis thaliana (Mouse-ear cress) protein is Oligoribonuclease.